Consider the following 336-residue polypeptide: Monoacylglycerol lipase ABHD6 (336 aa).

Over 1 to 8 (MDLDVVNM) the chain is Extracellular. Residues 9 to 29 (FVIAGGTLAIPILAFVASFLL) form a helical; Signal-anchor for type II membrane protein membrane-spanning segment. The Cytoplasmic segment spans residues 30–336 (WPSALIRIYY…VHNTDNKKLN (307 aa)). Serine 148 acts as the Nucleophile in catalysis. Active-site charge relay system residues include aspartate 278 and histidine 306.

It belongs to the AB hydrolase superfamily. As to expression, widely expressed with higher expression in small intestine, liver and brown adipose tissue. In brain, expressed postsynaptically in cortical neurons but not detected in microglia (at protein level).

The protein resides in the late endosome membrane. It localises to the lysosome membrane. The protein localises to the mitochondrion membrane. The catalysed reaction is Hydrolyzes glycerol monoesters of long-chain fatty acids.. It carries out the reaction 2-(5Z,8Z,11Z,14Z-eicosatetraenoyl)-glycerol + H2O = glycerol + (5Z,8Z,11Z,14Z)-eicosatetraenoate + H(+). The enzyme catalyses 1-octanoylglycerol + H2O = octanoate + glycerol + H(+). It catalyses the reaction 1-decanoylglycerol + H2O = decanoate + glycerol + H(+). The catalysed reaction is 1-dodecanoylglycerol + H2O = dodecanoate + glycerol + H(+). It carries out the reaction 1-tetradecanoylglycerol + H2O = tetradecanoate + glycerol + H(+). The enzyme catalyses 2-hexadecanoylglycerol + H2O = glycerol + hexadecanoate + H(+). It catalyses the reaction 2-(9Z-octadecenoyl)-glycerol + H2O = glycerol + (9Z)-octadecenoate + H(+). The catalysed reaction is 1-(9Z-octadecenoyl)-glycerol + H2O = glycerol + (9Z)-octadecenoate + H(+). It carries out the reaction 2-(9Z,12Z-octadecadienoyl)-glycerol + H2O = (9Z,12Z)-octadecadienoate + glycerol + H(+). The enzyme catalyses 1-(5Z,8Z,11Z,14Z-eicosatetraenoyl)-glycerol + H2O = glycerol + (5Z,8Z,11Z,14Z)-eicosatetraenoate + H(+). It catalyses the reaction 1-(9Z,12Z-octadecadienoyl)-glycerol + H2O = (9Z,12Z)-octadecadienoate + glycerol + H(+). The catalysed reaction is 3-(9Z-octadecenoyl)-sn-glycero-1-phospho-(3'-(9Z-octadecenoyl)-1'-sn-glycerol) + H2O = 3-(9Z-octadecenoyl)-sn-glycero-1-phospho-(1'-sn-glycerol) + (9Z)-octadecenoate + H(+). It carries out the reaction (S,S)-2-(9Z-octadecenoyl)-sn-glycero-1-phospho-(2'-(9Z-octadecenoyl)-1'-sn-glycerol) + H2O = (S,S)-2-(9Z-octadecenoyl)-sn-glycero-1-phospho-(1'-sn-glycerol) + (9Z)-octadecenoate + H(+). The enzyme catalyses (R,R)-2-(9Z-octadecenoyl)-sn-glycero-3-phospho-(2'-(9Z-octadecenoyl)-3'-sn-glycerol) + H2O = (R,R)-2-(9Z-octadecenoyl)-sn-glycero-3-phospho-(3'-sn-glycerol) + (9Z)-octadecenoate + H(+). Its function is as follows. Lipase that preferentially hydrolysis medium-chain saturated monoacylglycerols including 2-arachidonoylglycerol. Through 2-arachidonoylglycerol degradation may regulate endocannabinoid signaling pathways. Also has a lysophosphatidyl lipase activity with a preference for lysophosphatidylglycerol among other lysophospholipids. Also able to degrade bis(monoacylglycero)phosphate (BMP) and constitutes the major enzyme for BMP catabolism. BMP, also known as lysobisphosphatidic acid, is enriched in late endosomes and lysosomes and plays a key role in the formation of intraluminal vesicles and in lipid sorting. This chain is Monoacylglycerol lipase ABHD6, found in Mus musculus (Mouse).